A 224-amino-acid polypeptide reads, in one-letter code: Thiamine-phosphate synthase (224 aa).

Residues 44-48 and asparagine 79 each bind 4-amino-2-methyl-5-(diphosphooxymethyl)pyrimidine; that span reads QFREK. 2 residues coordinate Mg(2+): aspartate 80 and aspartate 99. 4-amino-2-methyl-5-(diphosphooxymethyl)pyrimidine is bound at residue serine 117. 143–145 lines the 2-[(2R,5Z)-2-carboxy-4-methylthiazol-5(2H)-ylidene]ethyl phosphate pocket; the sequence is TST. Lysine 146 provides a ligand contact to 4-amino-2-methyl-5-(diphosphooxymethyl)pyrimidine. 2-[(2R,5Z)-2-carboxy-4-methylthiazol-5(2H)-ylidene]ethyl phosphate-binding positions include glycine 175 and 195–196; that span reads IS.

This sequence belongs to the thiamine-phosphate synthase family. Requires Mg(2+) as cofactor.

It catalyses the reaction 2-[(2R,5Z)-2-carboxy-4-methylthiazol-5(2H)-ylidene]ethyl phosphate + 4-amino-2-methyl-5-(diphosphooxymethyl)pyrimidine + 2 H(+) = thiamine phosphate + CO2 + diphosphate. The enzyme catalyses 2-(2-carboxy-4-methylthiazol-5-yl)ethyl phosphate + 4-amino-2-methyl-5-(diphosphooxymethyl)pyrimidine + 2 H(+) = thiamine phosphate + CO2 + diphosphate. The catalysed reaction is 4-methyl-5-(2-phosphooxyethyl)-thiazole + 4-amino-2-methyl-5-(diphosphooxymethyl)pyrimidine + H(+) = thiamine phosphate + diphosphate. It functions in the pathway cofactor biosynthesis; thiamine diphosphate biosynthesis; thiamine phosphate from 4-amino-2-methyl-5-diphosphomethylpyrimidine and 4-methyl-5-(2-phosphoethyl)-thiazole: step 1/1. Functionally, condenses 4-methyl-5-(beta-hydroxyethyl)thiazole monophosphate (THZ-P) and 2-methyl-4-amino-5-hydroxymethyl pyrimidine pyrophosphate (HMP-PP) to form thiamine monophosphate (TMP). This is Thiamine-phosphate synthase from Bacillus cereus (strain ATCC 10987 / NRS 248).